The chain runs to 1429 residues: DNA-directed RNA polymerase subunit beta' (1429 aa).

Positions 68, 70, 83, and 86 each coordinate Zn(2+). Residues Asp459, Asp461, and Asp463 each coordinate Mg(2+). Zn(2+)-binding residues include Cys805, Cys879, Cys886, and Cys889. The tract at residues 1407-1429 (ESFPLLGGDGEPASTTSSTTEGE) is disordered. A compositionally biased stretch (polar residues) spans 1419–1429 (ASTTSSTTEGE).

This sequence belongs to the RNA polymerase beta' chain family. The RNAP catalytic core consists of 2 alpha, 1 beta, 1 beta' and 1 omega subunit. When a sigma factor is associated with the core the holoenzyme is formed, which can initiate transcription. Mg(2+) serves as cofactor. It depends on Zn(2+) as a cofactor.

It catalyses the reaction RNA(n) + a ribonucleoside 5'-triphosphate = RNA(n+1) + diphosphate. Its function is as follows. DNA-dependent RNA polymerase catalyzes the transcription of DNA into RNA using the four ribonucleoside triphosphates as substrates. The chain is DNA-directed RNA polymerase subunit beta' from Rhodopirellula baltica (strain DSM 10527 / NCIMB 13988 / SH1).